We begin with the raw amino-acid sequence, 548 residues long: (S)-beta-macrocarpene synthase (548 aa).

Residues Asp302 and Asp306 each contribute to the Mg(2+) site. Positions 302, 306, 443, and 446 each coordinate substrate. A DDXXD motif motif is present at residues Asp302–Asp306. Residues Asn446, Ser450, and Glu454 each contribute to the Mg(2+) site.

The protein belongs to the terpene synthase family. In terms of assembly, monomer. Mg(2+) serves as cofactor. The cofactor is Mn(2+). As to expression, expressed in roots. Not detected in leaves, unless damaged by herbivory or infected by fungi.

Its subcellular location is the cytoplasm. The enzyme catalyses (S)-beta-bisabolene = (S)-beta-macrocarpene. It carries out the reaction (2E,6E)-farnesyl diphosphate = (S)-beta-bisabolene + diphosphate. It catalyses the reaction (2E)-geranyl diphosphate = (4S)-limonene + diphosphate. The catalysed reaction is (2E)-geranyl diphosphate = beta-myrcene + diphosphate. The enzyme catalyses (2E)-geranyl diphosphate = terpinolene + diphosphate. It carries out the reaction (2E)-geranyl diphosphate + H2O = (S)-linalool + diphosphate. The protein operates within secondary metabolite biosynthesis; terpenoid biosynthesis. Its function is as follows. Involved in the biosynthesis of the bicyclic sesquiterpene (S)-beta-macrocarpene. Can use both geranyl diphosphate and farnesyl diphosphate as substrate, but not geranylgeranyl diphosphate. Produces mainly (S)-beta-macrocarpene, but also smaller amounts of beta-bisabolene and (E)-beta-farnesene when used with farnesyl diphosphate as substrate. In the presence of geranyl diphosphate, produces the acyclic monoterpenes beta-myrcene and linalool along with minor amounts of the cyclic compounds limonene, alpha-thujene, sabinene and alpha-terpinolene. May be involved in plant defense. The sequence is that of (S)-beta-macrocarpene synthase from Zea mays (Maize).